The following is a 125-amino-acid chain: Glycine cleavage system H protein (125 aa).

The 81-residue stretch at 23–103 (TALVGITDFA…PYNAWLIKMK (81 aa)) folds into the Lipoyl-binding domain. Lys64 bears the N6-lipoyllysine mark.

The protein belongs to the GcvH family. In terms of assembly, the glycine cleavage system is composed of four proteins: P, T, L and H. It depends on (R)-lipoate as a cofactor.

In terms of biological role, the glycine cleavage system catalyzes the degradation of glycine. The H protein shuttles the methylamine group of glycine from the P protein to the T protein. This is Glycine cleavage system H protein from Chlorobium chlorochromatii (strain CaD3).